The sequence spans 899 residues: Alanine--tRNA ligase (899 aa).

Zn(2+) contacts are provided by H595, H599, C703, and H707.

Belongs to the class-II aminoacyl-tRNA synthetase family. The cofactor is Zn(2+).

Its subcellular location is the cytoplasm. The catalysed reaction is tRNA(Ala) + L-alanine + ATP = L-alanyl-tRNA(Ala) + AMP + diphosphate. Functionally, catalyzes the attachment of alanine to tRNA(Ala) in a two-step reaction: alanine is first activated by ATP to form Ala-AMP and then transferred to the acceptor end of tRNA(Ala). Also edits incorrectly charged Ser-tRNA(Ala) and Gly-tRNA(Ala) via its editing domain. The chain is Alanine--tRNA ligase from Caldivirga maquilingensis (strain ATCC 700844 / DSM 13496 / JCM 10307 / IC-167).